Consider the following 236-residue polypeptide: Phosphatidylserine decarboxylase proenzyme (236 aa).

S194 (schiff-base intermediate with substrate; via pyruvic acid) is an active-site residue. Pyruvic acid (Ser); by autocatalysis is present on S194.

It belongs to the phosphatidylserine decarboxylase family. PSD-A subfamily. Heterodimer of a large membrane-associated beta subunit and a small pyruvoyl-containing alpha subunit. Pyruvate serves as cofactor. Is synthesized initially as an inactive proenzyme. Formation of the active enzyme involves a self-maturation process in which the active site pyruvoyl group is generated from an internal serine residue via an autocatalytic post-translational modification. Two non-identical subunits are generated from the proenzyme in this reaction, and the pyruvate is formed at the N-terminus of the alpha chain, which is derived from the carboxyl end of the proenzyme. The post-translation cleavage follows an unusual pathway, termed non-hydrolytic serinolysis, in which the side chain hydroxyl group of the serine supplies its oxygen atom to form the C-terminus of the beta chain, while the remainder of the serine residue undergoes an oxidative deamination to produce ammonia and the pyruvoyl prosthetic group on the alpha chain.

Its subcellular location is the cell membrane. It carries out the reaction a 1,2-diacyl-sn-glycero-3-phospho-L-serine + H(+) = a 1,2-diacyl-sn-glycero-3-phosphoethanolamine + CO2. It participates in phospholipid metabolism; phosphatidylethanolamine biosynthesis; phosphatidylethanolamine from CDP-diacylglycerol: step 2/2. Catalyzes the formation of phosphatidylethanolamine (PtdEtn) from phosphatidylserine (PtdSer). In Rhodospirillum rubrum (strain ATCC 11170 / ATH 1.1.1 / DSM 467 / LMG 4362 / NCIMB 8255 / S1), this protein is Phosphatidylserine decarboxylase proenzyme.